The sequence spans 1264 residues: Protein kibra (1264 aa).

Over residues 1 to 14 (MSNQQQQQLPRQLP) the composition is skewed to low complexity. A disordered region spans residues 1-40 (MSNQQQQQLPRQLPQPHPHHHHHHHQQQPGQHSEFPLPDG). A compositionally biased stretch (basic residues) spans 17-26 (HPHHHHHHHQ). 2 consecutive WW domains span residues 35–68 (FPLP…DPRD) and 82–115 (DELP…DPRQ). Coiled coils occupy residues 129–215 (LSAA…YTER), 258–288 (EKVR…AELL), and 319–445 (AEMA…RLKS). The segment covering 513–544 (PAVQLQQQHQLQQQTQPQPASEVSLSPRSSLS) has biased composition (low complexity). A disordered region spans residues 513–545 (PAVQLQQQHQLQQQTQPQPASEVSLSPRSSLSI). The C2 domain maps to 691 to 811 (ELAQVQIGLK…NPDDSTLKWY (121 aa)). Composition is skewed to low complexity over residues 845–856 (IINNNNNNNNNN) and 864–876 (ESTI…STLT). Disordered regions lie at residues 845 to 880 (IINN…RNQA) and 1200 to 1254 (RNKN…RYDY).

Belongs to the WWC family. KIBRA subfamily. As to quaternary structure, forms a complex with Mer and Ex. Interacts (via domain WW 1) with Ex (via RXPPXY motif). Interacts with Mer, Sav, Hpo and Wts.

It localises to the cytoplasm. It is found in the apical cell membrane. Regulator of the Hippo/SWH (Sav/Wts/Hpo) signaling pathway, a signaling pathway that plays a pivotal role in organ size control and tumor suppression by restricting proliferation and promoting apoptosis. The core of this pathway is composed of a kinase cascade wherein Hippo (Hpo), in complex with its regulatory protein Salvador (Sav), phosphorylates and activates Warts (Wts) in complex with its regulatory protein Mats, which in turn phosphorylates and inactivates the Yorkie (Yki) oncoprotein. Kibra acts synergistically along with Ex and Mer to regulate the Hippo signaling pathway. The sequence is that of Protein kibra (Kibra) from Drosophila mojavensis (Fruit fly).